The primary structure comprises 263 residues: Probable esterase PIR7A (263 aa).

The active-site Acyl-ester intermediate is serine 82. Catalysis depends on charge relay system residues aspartate 213 and histidine 241.

The protein belongs to the AB hydrolase superfamily.

This is Probable esterase PIR7A (PIR7A) from Oryza sativa subsp. indica (Rice).